We begin with the raw amino-acid sequence, 460 residues long: MLKIYNTLSGKKEIFKPIEEGKVGMYVCGNTVYDFCHIGHARAMISFDVISRFIRHLGYELNYVRNITDVDDKIIKRAEENNESTQSLTERMIAAQREDELRLGNKMPDREPKATEFMQEIIDMVQVLIDKGFAYQGTSGDVYYRATKFKDYGKLNNRKLEDMLAGARIDVEVAKEHPADFVLWKQAKAGEVSWSSPWGEGRPGWHIECSAMSTNCLGSHFDIHGGGPDLKFPHHENEIAQSEAATGKEYVNYWMHCGAVRVNNEKMSKSLGNFFTVRDVLAKFNPEVVRYLMVSSQYRSAIDYSDQSLLEAKVALERLYTALRQQQVAESFEPTVFTERFEEAMKDDFNTAVAVSVLFELVRELNKAKTEDANKASLLAAELRSLAELLGLLYQDPEYFLQNSTVSEGLGEVAIQALIDERTQARKDKNFARSDEIRDELASQGIELLDSREGTTWTRS.

Cysteine 28 serves as a coordination point for Zn(2+). Positions 30 to 40 match the 'HIGH' region motif; the sequence is NTVYDFCHIGH. Zn(2+)-binding residues include cysteine 209, histidine 234, and glutamate 238. The 'KMSKS' region signature appears at 266 to 270; that stretch reads KMSKS. Residue lysine 269 coordinates ATP.

Belongs to the class-I aminoacyl-tRNA synthetase family. In terms of assembly, monomer. Zn(2+) is required as a cofactor.

It localises to the cytoplasm. The enzyme catalyses tRNA(Cys) + L-cysteine + ATP = L-cysteinyl-tRNA(Cys) + AMP + diphosphate. The sequence is that of Cysteine--tRNA ligase from Marinomonas sp. (strain MWYL1).